The following is a 2014-amino-acid chain: Leucine-rich repeat serine/threonine-protein kinase 1 (2014 aa).

5 ANK repeats span residues 51–81 (QCPS…CEES), 86–116 (EKGQ…ELPT), 119–148 (TDDN…GPCT), 152–182 (LLNW…DPEN), and 193–222 (IVRL…YFCS). LRR repeat units lie at residues 279 to 300 (QITE…IPWG), 303 to 324 (NLKK…QSSD), 330 to 351 (RLLE…FLHL), 353 to 374 (KLQK…ENAT), 381 to 402 (KLQE…FMHS), 405 to 426 (SLTS…WSCP), 427 to 447 (LKCC…MAVF), 451 to 472 (HLRD…LFQL), 474 to 495 (ALMF…EKWT), 498 to 519 (QLKT…LKTK), 549 to 570 (SLEV…VCLL), 572 to 594 (NLSE…LGQL), and 596 to 617 (NLWQ…VRKE). Positions 632–826 (KAEKCKLMKM…QLIFHVTCNM (195 aa)) constitute a Roc domain. 11 residues coordinate GDP: Pro647, Arg648, Gly650, Lys651, Ser652, Thr653, Glu670, His758, Asp760, Cys806, and Lys807. Residues 840–1237 (GRLIPRSYIS…PARLFLENSK (398 aa)) form the COR domain. Position 1061 is a phosphothreonine (Thr1061). Phosphoserine occurs at positions 1064 and 1074. Thr1075 carries the post-translational modification Phosphothreonine. Residues 1242–1525 (EGENSILGQG…VVSQMKDPTF (284 aa)) enclose the Protein kinase domain. ATP-binding positions include 1248 to 1256 (LGQGGSGTV) and Lys1270. Asp1386 (proton acceptor) is an active-site residue. WD repeat units lie at residues 1539–1579 (AFFS…RMTC), 1582–1622 (MKLS…QALD), 1623–1668 (TPAV…SCSY), 1693–1729 (VKAM…RLEP), 1730–1778 (YAAP…YFCG), 1779–1948 (DPNP…AVLK), and 1950–1986 (RELN…AVWR). The interval 1791-1906 (PSVLETPGSH…MDGETFSQHL (116 aa)) is WD40 loop; involved in dimer stabilization. Residues 1839-1895 (SMSSYSSSPPHQDPRSPSSLPSSLTSYSSVPFSANYEDSDRLQEPSVTSDRTEHDLS) form a disordered region. Over residues 1853-1871 (RSPSSLPSSLTSYSSVPFS) the composition is skewed to low complexity.

The protein belongs to the protein kinase superfamily. TKL Ser/Thr protein kinase family. ROCO subfamily. Homodimer. The homodimer is autoinhibited and stabilized by its N-terminal residues and ANK repeats. Interacts with CSK. Requires Mg(2+) as cofactor. Mn(2+) serves as cofactor. Autophosphorylated. Autophosphorylation in inhibited in its dimeric state. Phosphorylated by protein kinase C isozymes PRKCA, PRKCB, PRKCG, PRKCE, PRKCZ and PRKCT at Ser-1064, Ser-1074 and Thr-1075. Phosphorylation at these residues activates the kinase activity of LRRK1 to phosphorylate RAB7A. As to expression, expressed in osteoclasts and bone marrow stromal cells.

It localises to the cytoplasm. It is found in the cell membrane. It carries out the reaction L-seryl-[protein] + ATP = O-phospho-L-seryl-[protein] + ADP + H(+). The catalysed reaction is L-threonyl-[protein] + ATP = O-phospho-L-threonyl-[protein] + ADP + H(+). Its activity is regulated as follows. Activated by phosphorylation by PKC. Binds both GTP and GDP; binding of GTP stimulates kinase activity. Sterically autoinhibited in its dimeric state. In terms of biological role, serine/threonine-protein kinase which phosphorylates RAB proteins involved in intracellular trafficking. Phosphorylates RAB7A; this activity is dependent on protein kinase C (PKC) activation. Plays a role in the negative regulation of bone mass, acting through the maturation of osteoclasts. The polypeptide is Leucine-rich repeat serine/threonine-protein kinase 1 (Mus musculus (Mouse)).